The following is a 303-amino-acid chain: N-acetyl-D-glucosamine kinase (303 aa).

ATP is bound by residues 4–11 and 133–140; these read GFDIGGTK and GVGGGLVL. Positions 157, 177, 179, and 184 each coordinate Zn(2+).

This sequence belongs to the ROK (NagC/XylR) family. NagK subfamily.

The catalysed reaction is N-acetyl-D-glucosamine + ATP = N-acetyl-D-glucosamine 6-phosphate + ADP + H(+). It participates in cell wall biogenesis; peptidoglycan recycling. In terms of biological role, catalyzes the phosphorylation of N-acetyl-D-glucosamine (GlcNAc) derived from cell-wall degradation, yielding GlcNAc-6-P. The chain is N-acetyl-D-glucosamine kinase from Salmonella choleraesuis (strain SC-B67).